A 600-amino-acid polypeptide reads, in one-letter code: E3 ubiquitin-protein ligase RLIM (600 aa).

Position 1 is an N-acetylmethionine (M1). The segment covering 1–11 has biased composition (basic and acidic residues); sequence MENSDSNDKGS. Disordered regions lie at residues 1–24, 49–355, and 417–497; these read MENS…QMDR, NNLL…ERGG, and SDSE…VTFD. Composition is skewed to polar residues over residues 103–131 and 140–152; these read SVRQ…NPNS and INVN…QTSE. S163 bears the Phosphoserine mark. Residues 166–175 are compositionally biased toward polar residues; the sequence is NMESSSQRQM. The span at 176-187 shows a compositional bias: low complexity; it reads ENSASESASARP. Phosphoserine occurs at positions 194, 227, and 229. Positions 213 to 228 are enriched in basic and acidic residues; the sequence is RSPEHRRTRARAERSR. Positions 244–255 are enriched in polar residues; that stretch reads LEQSSENEPEGS. S269 bears the Phosphoserine mark. The segment covering 288-306 has biased composition (low complexity); it reads SQGTSSSDTGSNSESSGSG. Over residues 322-332 the composition is skewed to basic and acidic residues; sequence RPGEYRQRDSI. Residues 333-349 are compositionally biased toward polar residues; sequence ASRTRSRSQAPNNTVTY. The span at 448-475 shows a compositional bias: low complexity; it reads SGSSSSSSPSPSSSGESSESSSEMFEGS. An RING-type zinc finger spans residues 546-587; sequence CSVCITEYTEGNKLRKLPCSHEYHVHCIDRWLSENSTCPICR. The PDZ-binding motif lies at 597–600; the sequence is ESVV.

It belongs to the RNF12 family. In terms of assembly, interacts (via N-terminus) with TERF1. Interacts (via C-terminus) with ESR1. Interacts with LIM/homeobox factors such as LHX3. Interacts with LDB1, LDB2 and SIN3A. Interacts with LIMK1.

It is found in the nucleus. It carries out the reaction S-ubiquitinyl-[E2 ubiquitin-conjugating enzyme]-L-cysteine + [acceptor protein]-L-lysine = [E2 ubiquitin-conjugating enzyme]-L-cysteine + N(6)-ubiquitinyl-[acceptor protein]-L-lysine.. It participates in protein modification; protein ubiquitination. Functionally, E3 ubiquitin-protein ligase that acts as a negative coregulator for LIM homeodomain transcription factors by mediating the ubiquitination and subsequent degradation of LIM cofactors LDB1 and LDB2 and by mediating the recruitment the SIN3a/histone deacetylase corepressor complex. Ubiquitination and degradation of LIM cofactors LDB1 and LDB2 allows DNA-bound LIM homeodomain transcription factors to interact with other protein partners such as RLIM. Plays a role in telomere length-mediated growth suppression by mediating the ubiquitination and degradation of TERF1. By targeting ZFP42 for degradation, acts as an activator of random inactivation of X chromosome in the embryo, a stochastic process in which one X chromosome is inactivated to minimize sex-related dosage differences of X-encoded genes in somatic cells of female placental mammals. This Mus musculus (Mouse) protein is E3 ubiquitin-protein ligase RLIM (Rlim).